The sequence spans 785 residues: (+)-copalyl diphosphate synthase 3, chloroplastic (785 aa).

Lys-238 is a substrate binding site. Positions 371 and 373 each coordinate Mg(2+). A DXDD motif motif is present at residues 371–374 (DIDD). Lys-457 is a substrate binding site.

The protein belongs to the terpene synthase family. Requires Mg(2+) as cofactor. Present in both leaves and flowers, with higher levels in leaves.

It localises to the plastid. It is found in the chloroplast. It carries out the reaction (2E,6E,10E)-geranylgeranyl diphosphate = (+)-copalyl diphosphate. Its pathway is secondary metabolite biosynthesis; terpenoid biosynthesis. Its function is as follows. Involved in the biosynthesis of labdane-type diterpenoid including marrubiin and other labdane-related furanoid diterpenoids with potential applications as anti-diabetics, analgesics or vasorelaxants. Terpene synthase that produces (+)-copalyl diphosphate ((+)-CPP) from geranylgeranyl diphosphate (GGPP). The protein is (+)-copalyl diphosphate synthase 3, chloroplastic of Marrubium vulgare (White horehound).